The sequence spans 185 residues: CASP-like protein SELMODRAFT_413556 (185 aa).

The Cytoplasmic segment spans residues 1–89; the sequence is MATLPLSLIF…AVTVLFYLAK (89 aa). The helical transmembrane segment at 90 to 110 threads the bilayer; that stretch reads LVFGILGLALSIIWLLHIIVF. Residues 111-131 lie on the Extracellular side of the membrane; that stretch reads MLVNPPAFPFLNQVFIQLDSA. The helical transmembrane segment at 132–152 threads the bilayer; sequence WGLLGTTAFAIFCYYLIMSVI. The Cytoplasmic segment spans residues 153 to 163; that stretch reads SGEMHSIHPMK. Residues 164 to 184 form a helical membrane-spanning segment; that stretch reads YQGTLMNSFLFNVAIILLCST. Residue Arg185 is a topological domain, extracellular.

It belongs to the Casparian strip membrane proteins (CASP) family. Homodimer and heterodimers.

It localises to the cell membrane. The sequence is that of CASP-like protein SELMODRAFT_413556 from Selaginella moellendorffii (Spikemoss).